A 538-amino-acid polypeptide reads, in one-letter code: Myeloid cell nuclear differentiation antigen-like protein (538 aa).

The Pyrin domain maps to 1-87 (MAEYKKIVLL…AKKLKTEKAK (87 aa)). The disordered stretch occupies residues 120–306 (SYKSVPSSKK…PQPQNQNIPR (187 aa)). Composition is skewed to basic and acidic residues over residues 135–153 (AKTE…DHLP) and 245–262 (RREE…KEPD). A compositionally biased stretch (low complexity) spans 276-305 (SPILHSSSSASSNIPSATNQKPQPQNQNIP). One can recognise an HIN-200 domain in the interval 299–499 (PQNQNIPRGA…CGDHSFVKIK (201 aa)).

It belongs to the HIN-200 family. Highest expression observed in spleen and thymus with moderate levels in bone marrow, lung, skin and heart, low levels in muscle, liver and intestine and little or no expression in brain and pancreas.

The protein localises to the nucleus. Suppresses cell growth when expressed ectopically. The polypeptide is Myeloid cell nuclear differentiation antigen-like protein (Mus musculus (Mouse)).